Here is a 407-residue protein sequence, read N- to C-terminus: O-methyltransferase verK (407 aa).

S-adenosyl-L-methionine contacts are provided by residues Glu-263 and 295–297 (GDF). The Proton acceptor role is filled by His-314.

The protein belongs to the class I-like SAM-binding methyltransferase superfamily. Cation-independent O-methyltransferase family.

It participates in mycotoxin biosynthesis. O-methyltransferase; part of the gene cluster that mediates the biosynthesis of 11'-deoxyverticillin A, one of the dimeric epipolythiodioxopiperazines (ETPs) from the verticillin family that act as mycotoxins. 11'-deoxyverticillin A is required for normal conidiation. The nonribosomal peptide synthetase verP is speculated to be responsible for condensation of amino acids to form the carbon skeleton of verticillin, whereas the cluster-specific tailoring enzymes are involved in further modifications leading to the production of 11'-deoxyverticillin A. In Clonostachys rogersoniana, this protein is O-methyltransferase verK.